Reading from the N-terminus, the 68-residue chain is Large ribosomal subunit protein bL32 (68 aa).

The tract at residues 1-20 is disordered; sequence MAVQQNKVSKSRRNNRRAHD.

This sequence belongs to the bacterial ribosomal protein bL32 family.

This is Large ribosomal subunit protein bL32 from Ruegeria sp. (strain TM1040) (Silicibacter sp.).